A 599-amino-acid polypeptide reads, in one-letter code: Putative sensor histidine kinase NtrY-like (599 aa).

The next 4 helical transmembrane spans lie at 17 to 37, 44 to 64, 85 to 105, and 285 to 305; these read VLIFTLATAAIIFACATFYVI, FSTIIGFLLVDLAIFLILGVV, IVIAFSLVAAIPTIIVSVFSV, and IMFIFIALLLLFVAISFGVIF. Residues 307–361 enclose the HAMP domain; sequence AKIVKPIKKLVTATDNVKDGDLTVQVPENEVDKDEIGTLYVAFNRMIKQLSRQQR. The Histidine kinase domain occupies 378-589; the sequence is KVAHEIKNPL…IIDIKFDLKE (212 aa). Phosphohistidine; by autocatalysis is present on His381.

Its subcellular location is the cell membrane. It catalyses the reaction ATP + protein L-histidine = ADP + protein N-phospho-L-histidine.. In terms of biological role, member of the two-component regulatory system RC0948/RC0849. The chain is Putative sensor histidine kinase NtrY-like from Rickettsia conorii (strain ATCC VR-613 / Malish 7).